Here is a 322-residue protein sequence, read N- to C-terminus: Ribosome biogenesis protein RLP7 (322 aa).

A compositionally biased stretch (polar residues) spans 1-16 (MSSTQDSKAQTLNSNP). Residues 1 to 52 (MSSTQDSKAQTLNSNPEILLRKRRNADRTRIERQELAKKKREEQIKKKRSNK) form a disordered region. Serine 2 carries the N-acetylserine modification. Serine 14 is modified (phosphoserine). Basic and acidic residues predominate over residues 26–45 (ADRTRIERQELAKKKREEQI). Threonine 120 carries the post-translational modification Phosphothreonine. Serine 278 is subject to Phosphoserine.

Belongs to the universal ribosomal protein uL30 family.

The protein resides in the nucleus. Its subcellular location is the nucleolus. Its function is as follows. Involved in the biogenesis of the 60S ribosomal subunit. May act as a specificity factor that binds precursor rRNAs and tethers the enzymes that carry out the early 5' to 3' exonucleolytic reactions that generate the mature rRNAs. The chain is Ribosome biogenesis protein RLP7 (RLP7) from Saccharomyces cerevisiae (strain ATCC 204508 / S288c) (Baker's yeast).